Consider the following 428-residue polypeptide: Protein clpf-1 (428 aa).

ATP-binding positions include Glu-16, Arg-56, and 124–129 (DVGKTT).

This sequence belongs to the Clp1 family. Clp1 subfamily.

It localises to the nucleus. In terms of biological role, required for endonucleolytic cleavage during polyadenylation-dependent pre-mRNA 3'-end formation. In Caenorhabditis elegans, this protein is Protein clpf-1.